Reading from the N-terminus, the 822-residue chain is BDNF/NT-3 growth factors receptor (822 aa).

A signal peptide spans 1-31; the sequence is MSSWIRWHGPAMARLWGFCWLVVGFWRAAFA. 2 cysteine pairs are disulfide-bonded: Cys32–Cys38 and Cys36–Cys45. An LRRNT domain is found at 32-61; the sequence is CPTSCKCSASRIWCSDPSPGIVAFPRLEPN. At 32–430 the chain is on the extracellular side; it reads CPTSCKCSAS…DVTDKTGREH (399 aa). N-linked (GlcNAc...) asparagine glycosylation is found at Asn67, Asn95, and Asn121. 2 LRR repeats span residues 92–113 and 116–137; these read GLRN…AFLK and NLQH…HFRH. Residues 148 to 196 form the LRRCT domain; the sequence is NPFTCSCDIMWIKTLQEAKSSPDTQDLYCLNESSKNIPLANLQIPNCGL. 2 disulfides stabilise this stretch: Cys152–Cys176 and Cys154–Cys194. Asn178, Asn205, Asn241, Asn254, Asn280, Asn325, Asn338, and Asn412 each carry an N-linked (GlcNAc...) asparagine glycan. 2 Ig-like C2-type domains span residues 197–282 and 295–365; these read PSAN…VNLT and PTSD…IAKN. Residues Cys218 and Cys266 are joined by a disulfide bond. Cysteines 302 and 345 form a disulfide. Residues 431-454 traverse the membrane as a helical segment; that stretch reads LSVYAVVVIASVVGFCLLVMLFLL. The segment at 455–466 is interaction with MAPK8IP3/JIP3; sequence KLARHSKFGMKG. The Cytoplasmic portion of the chain corresponds to 455–822; that stretch reads KLARHSKFGM…ASPVYLDILG (368 aa). A disordered region spans residues 475–498; the sequence is DDSASPLHHISNGSNTPSSSEGGP. A compositionally biased stretch (polar residues) spans 485–495; sequence SNGSNTPSSSE. Tyr516 is modified (phosphotyrosine; by autocatalysis). The region spanning 538–807 is the Protein kinase domain; sequence IVLKRELGEG…KNIKGIHTLL (270 aa). ATP is bound by residues 544-552 and Lys572; that span reads LGEGAFGKV. Catalysis depends on Asp676, which acts as the Proton acceptor. Phosphotyrosine; by autocatalysis occurs at positions 702, 706, 707, and 817.

The protein belongs to the protein kinase superfamily. Tyr protein kinase family. Insulin receptor subfamily. Exists in a dynamic equilibrium between monomeric (low affinity) and dimeric (high affinity) structures. Interacts (phosphorylated upon activation by BDNF) with SHC1; mediates SHC1 phosphorylation and activation. Interacts (phosphorylated upon activation by BDNF) with PLCG1 and/or PLCG2; mediates PLCG1 phosphorylation and activation. Interacts with SH2B1 and SH2B2. Interacts with NGFR; may regulate the ligand specificity of the receptor. Interacts with SORCS2; this interaction is important for normal targeting to post-synaptic densities in response to high-frequency stimulation. Interacts (phosphorylated upon ligand-binding) with SH2D1A; regulates NTRK2. Interacts with SQSTM1 and KIDINS220. Interacts (phosphorylated upon ligand-binding) with FRS2; activates the MAPK signaling pathway. Interacts with APPL1. Interacts with MAPK8IP3/JIP3 and KLC1; interaction with KLC1 is mediated by MAPK8IP3/JIP3. Interacts with SORL1; this interaction facilitates NTRK2 trafficking between synaptic plasma membranes, postsynaptic densities and cell soma, hence positively regulates BDNF signaling. Interacts with SLITRK2. In terms of processing, phosphorylated. Undergoes ligand-mediated autophosphorylation that is required for interaction with SHC1 and PLCG1 and other downstream effectors. Isoform TrkB-T-Shc is not phosphorylated. Post-translationally, ubiquitinated. Undergoes polyubiquitination upon activation; regulated by NGFR. Ubiquitination regulates the internalization of the receptor. As to expression, isoform TrkB is expressed in the central and peripheral nervous system. In the central nervous system (CNS), expression is observed in the cerebral cortex, hippocampus, thalamus, choroid plexus, granular layer of the cerebellum, brain stem, and spinal cord. In the peripheral nervous system, it is expressed in many cranial ganglia, the ophthalmic nerve, the vestibular system, multiple facial structures, the submaxillary glands, and dorsal root ganglia. Isoform TrkB-T1 is mainly expressed in the brain but also detected in other tissues including pancreas, kidney and heart. Isoform TrkB-T-Shc is predominantly expressed in the brain.

Its subcellular location is the cell membrane. It localises to the endosome membrane. The protein resides in the early endosome membrane. It is found in the cell projection. The protein localises to the axon. Its subcellular location is the dendrite. It localises to the cytoplasm. The protein resides in the perinuclear region. It is found in the postsynaptic density. It carries out the reaction L-tyrosyl-[protein] + ATP = O-phospho-L-tyrosyl-[protein] + ADP + H(+). Its activity is regulated as follows. The neuronal activity and the influx of calcium positively regulate the kinase activity and the internalization of the receptor which are both important for active signaling. Regulated by NGFR that may control the internalization of the receptor. NGFR may also stimulate the activation by BDNF compared to NTF3 and NTF4. SH2D1A inhibits the autophosphorylation of the receptor, and alters the recruitment and activation of downstream effectors and signaling cascades. The formation of active receptors dimers able to fully transduce the ligand-mediated signal, may be negatively regulated by the formation of inactive heterodimers with the non-catalytic isoforms. In terms of biological role, receptor tyrosine kinase involved in the development and the maturation of the central and the peripheral nervous systems through regulation of neuron survival, proliferation, migration, differentiation, and synapse formation and plasticity. Receptor for BDNF/brain-derived neurotrophic factor and NTF4/neurotrophin-4. Alternatively can also bind NTF3/neurotrophin-3 which is less efficient in activating the receptor but regulates neuron survival through NTRK2. Upon ligand-binding, undergoes homodimerization, autophosphorylation and activation. Recruits, phosphorylates and/or activates several downstream effectors including SHC1, FRS2, SH2B1, SH2B2 and PLCG1 that regulate distinct overlapping signaling cascades. Through SHC1, FRS2, SH2B1, SH2B2 activates the GRB2-Ras-MAPK cascade that regulates for instance neuronal differentiation including neurite outgrowth. Through the same effectors controls the Ras-PI3 kinase-AKT1 signaling cascade that mainly regulates growth and survival. Through PLCG1 and the downstream protein kinase C-regulated pathways controls synaptic plasticity. Thereby, plays a role in learning and memory by regulating both short term synaptic function and long-term potentiation. PLCG1 also leads to NF-Kappa-B activation and the transcription of genes involved in cell survival. Hence, it is able to suppress anoikis, the apoptosis resulting from loss of cell-matrix interactions. May also play a role in neutrophin-dependent calcium signaling in glial cells and mediate communication between neurons and glia. In Homo sapiens (Human), this protein is BDNF/NT-3 growth factors receptor (NTRK2).